Consider the following 112-residue polypeptide: Putative pterin-4-alpha-carbinolamine dehydratase (112 aa).

It belongs to the pterin-4-alpha-carbinolamine dehydratase family.

It carries out the reaction (4aS,6R)-4a-hydroxy-L-erythro-5,6,7,8-tetrahydrobiopterin = (6R)-L-erythro-6,7-dihydrobiopterin + H2O. This Hahella chejuensis (strain KCTC 2396) protein is Putative pterin-4-alpha-carbinolamine dehydratase.